Here is an 848-residue protein sequence, read N- to C-terminus: ATP-dependent Clp protease ATP-binding subunit ClpC1 (848 aa).

Residues 2–144 form the Clp R domain; the sequence is FERFTDRARR…RQQVIQLLSG (143 aa). Repeat stretches follow at residues 5 to 70 and 80 to 144; these read FTDR…IGQG and FTPR…LLSG. Residues 171–418 are i; it reads LDQFGRNLTA…RMRIRRMTAP (248 aa). ATP is bound at residue 216–223; sequence GEPGVGKT. Positions 425-460 constitute a UVR domain; sequence DEKIAEARREKESAIDAQDFEKAASLRDREKTLVAQ. An II region spans residues 479–670; the sequence is VDDEQIAEVL…VLIFTSNLGT (192 aa). 553-560 contacts ATP; the sequence is GPSGVGKT. Residues 821–848 are disordered; that stretch reads TGTRKPPAEPDLAKAGAHSAGGPEPAAR.

Belongs to the ClpA/ClpB family. ClpC subfamily.

ATP-dependent specificity component of the Clp protease. It directs the protease to specific substrates. Can perform chaperone functions in the absence of ClpP. Degrades anti-sigma-E factor RseA in the presence of ClpP2. The chain is ATP-dependent Clp protease ATP-binding subunit ClpC1 (clpC1) from Mycobacterium tuberculosis (strain ATCC 25618 / H37Rv).